A 96-amino-acid chain; its full sequence is Large ribosomal subunit protein eL30 (96 aa).

Belongs to the eukaryotic ribosomal protein eL30 family.

This chain is Large ribosomal subunit protein eL30, found in Methanosphaerula palustris (strain ATCC BAA-1556 / DSM 19958 / E1-9c).